The primary structure comprises 116 residues: Large ribosomal subunit protein bL19 (116 aa).

It belongs to the bacterial ribosomal protein bL19 family.

This protein is located at the 30S-50S ribosomal subunit interface and may play a role in the structure and function of the aminoacyl-tRNA binding site. The sequence is that of Large ribosomal subunit protein bL19 from Streptomyces griseus subsp. griseus (strain JCM 4626 / CBS 651.72 / NBRC 13350 / KCC S-0626 / ISP 5235).